A 309-amino-acid chain; its full sequence is Malate dehydrogenase (309 aa).

Residues 9-14 and Asp33 contribute to the NAD(+) site; that span reads GAGAVG. Substrate contacts are provided by Arg82 and Arg88. Residues Asn95 and 118–120 contribute to the NAD(+) site; that span reads VTN. Asn120 and Arg151 together coordinate substrate. The active-site Proton acceptor is His175.

Belongs to the LDH/MDH superfamily. MDH type 3 family.

It catalyses the reaction (S)-malate + NAD(+) = oxaloacetate + NADH + H(+). Catalyzes the reversible oxidation of malate to oxaloacetate. The sequence is that of Malate dehydrogenase from Thermomicrobium roseum (strain ATCC 27502 / DSM 5159 / P-2).